Consider the following 348-residue polypeptide: NADH-quinone oxidoreductase subunit H (348 aa).

8 helical membrane-spanning segments follow: residues 10-30 (LPLF…LVLI), 82-102 (GVFL…WAVV), 115-135 (VGLL…IMGG), 161-181 (IGFV…TTIV), 199-219 (LLDW…ISAL), 251-271 (LFFL…TILF), 287-307 (VPGV…FAMV), and 322-342 (LGWK…AAIL).

Belongs to the complex I subunit 1 family. As to quaternary structure, NDH-1 is composed of 14 different subunits. Subunits NuoA, H, J, K, L, M, N constitute the membrane sector of the complex.

The protein resides in the cell inner membrane. The enzyme catalyses a quinone + NADH + 5 H(+)(in) = a quinol + NAD(+) + 4 H(+)(out). In terms of biological role, NDH-1 shuttles electrons from NADH, via FMN and iron-sulfur (Fe-S) centers, to quinones in the respiratory chain. The immediate electron acceptor for the enzyme in this species is believed to be ubiquinone. Couples the redox reaction to proton translocation (for every two electrons transferred, four hydrogen ions are translocated across the cytoplasmic membrane), and thus conserves the redox energy in a proton gradient. This subunit may bind ubiquinone. This chain is NADH-quinone oxidoreductase subunit H, found in Bartonella bacilliformis (strain ATCC 35685 / KC583 / Herrer 020/F12,63).